Here is a 293-residue protein sequence, read N- to C-terminus: GTP cyclohydrolase FolE2 (293 aa).

The protein belongs to the GTP cyclohydrolase IV family.

The enzyme catalyses GTP + H2O = 7,8-dihydroneopterin 3'-triphosphate + formate + H(+). It functions in the pathway cofactor biosynthesis; 7,8-dihydroneopterin triphosphate biosynthesis; 7,8-dihydroneopterin triphosphate from GTP: step 1/1. Converts GTP to 7,8-dihydroneopterin triphosphate. This is GTP cyclohydrolase FolE2 from Pseudomonas entomophila (strain L48).